Here is a 625-residue protein sequence, read N- to C-terminus: Endoglucanase D (625 aa).

A signal peptide spans Ser-1–Ala-17. Asp-177 acts as the Nucleophile in catalysis. Active-site residues include His-492 and Asp-522. Glu-531 serves as the catalytic Proton donor. One can recognise a Dockerin domain in the interval Asn-555–Ile-625.

Belongs to the glycosyl hydrolase 9 (cellulase E) family. The cofactor is Ca(2+).

It carries out the reaction Endohydrolysis of (1-&gt;4)-beta-D-glucosidic linkages in cellulose, lichenin and cereal beta-D-glucans.. In terms of biological role, this enzyme catalyzes the endohydrolysis of 1,4-beta-glucosidic linkages in cellulose, lichenin and cereal beta-D-glucans. The sequence is that of Endoglucanase D (celD) from Acetivibrio thermocellus (Hungateiclostridium thermocellum).